Here is a 501-residue protein sequence, read N- to C-terminus: Alveolysin (501 aa).

Residues 1 to 32 (MKKKSNHLKGRKVLVSLLVSLQVFAFASISSA) form the signal peptide. 4 beta stranded membrane-spanning segments follow: residues 191–204 (QNQISSALNVNAKV), 211–220 (IDFNAVANGE), 289–298 (SNDVQTAFKL), and 306–318 (QASGQYKDIYENS). The short motif at 460 to 470 (ECTGLAWEWWR) is the Conserved undecapeptide element. The Cholesterol binding motif lies at 492 to 493 (TL).

It belongs to the cholesterol-dependent cytolysin family. Homooligomeric pore complex of 35 to 50 subunits; when inserted in the host membrane.

It is found in the secreted. The protein resides in the host cell membrane. Its activity is regulated as follows. Inhibited by cholesterol and thiol reagents. Its function is as follows. A cholesterol-dependent toxin that causes cytolysis by forming pores in cholesterol containing host membranes. After binding to target membranes, the protein undergoes a major conformation change, leading to its insertion in the host membrane and formation of an oligomeric pore complex. Cholesterol is required for binding to host cell membranes, membrane insertion and pore formation; cholesterol binding is mediated by a Thr-Leu pair in the C-terminus. Can be reversibly inactivated by oxidation. The polypeptide is Alveolysin (alv) (Paenibacillus alvei (Bacillus alvei)).